The following is a 329-amino-acid chain: Sorting assembly machinery 35 kDa subunit (329 aa).

In terms of assembly, component of the mitochondrial outer membrane sorting assembly machinery (SAM or TOB) complex, which at least consists of SAM35, SAM37 and SAM50.

The protein resides in the mitochondrion outer membrane. In terms of biological role, essential component of the mitochondrial outer membrane sorting assembly machinery (SAM or TOB) complex, which is required for the sorting of proteins with complicated topology, such as beta-barrel proteins, to the mitochondrial outer membrane after import by the TOM complex. The polypeptide is Sorting assembly machinery 35 kDa subunit (SAM35) (Saccharomyces cerevisiae (strain ATCC 204508 / S288c) (Baker's yeast)).